A 397-amino-acid chain; its full sequence is MDVLYSLSKTLKDARDKIVEGTLYSNVSDLIQQFNQMIITMNGNEFQTGGIGNLPIRNWNFDFGLLGTTLLNLDANYVETARNTIDYFVDFVDNVCMDEMVRESQRNGIAPQSDSLIKLSGIKFKRINFDNSSEYIENWNLQNRRQRTGFTFHKPNIFPYSASFTLNRSQPAHDNLMGTMWLNAGSEIQVAGFDYSCAINAPANTQQFEHIVQLRRVLTTATITLLPDAERFSFPRVITSADGATTWYFNPVILRPNNVEIEFLLNGQIINTYQARFGTIIARNFDTIRLSFQLMRPPNMTPAVAALFPNAQPFEHHATVGLTLRIESAVCESVLADASETMLANVTSVRQEYAIPVGPVFPPGMNWTDLITNYSPSREDNLQRVFTVASIRSMLVK.

Residues 62–73 (DFGLLGTTLLNL) form an interaction with the inner capsid protein VP2 region. A Zn(2+)-binding site is contributed by His-153. Residues Asn-266 and Asp-286 each coordinate Ca(2+).

Belongs to the rotavirus VP6 family. In terms of assembly, homotrimer. Interacts with the inner capsid protein VP2. Interacts with the outer capsid glycoprotein VP7. Interacts with the outer capsid protein VP5*. In terms of processing, the N-terminus is blocked. Post-translationally, sumoylated with SUMO1 and SUMO2. Sumoylation of viral proteins seems to have a positive role on viral replication.

The protein localises to the virion. Functionally, intermediate capsid protein that self assembles to form an icosahedral capsid with a T=13 symmetry, which consists of 230 trimers of VP6, with channels at each of its five-fold vertices. This capsid constitutes the middle concentric layer of the viral mature particle. The innermost VP2 capsid and the intermediate VP6 capsid remain intact following cell entry to protect the dsRNA from degradation and to prevent unfavorable antiviral responses in the host cell during all the replication cycle of the virus. Nascent transcripts are transcribed within the structural confines of this double-layered particle (DLP) and are extruded through the channels at the five-fold axes. VP6 is required for the transcription activity of the DLP. The protein is Intermediate capsid protein VP6 of Rotavirus A (strain RVA/Cow/France/RF/1975/G6P6[1]) (RV-A).